Consider the following 547-residue polypeptide: Agglutinin-1 (547 aa).

The signal sequence occupies residues 1 to 20 (MKFETTKNKLHGNAYYQAQF). Residue Gln-21 is modified to Pyrrolidone carboxylic acid. The active site involves Glu-183. Disulfide bonds link Cys-266/Cys-288, Cys-305/Cys-324, and Cys-348/Cys-365. Residues 279–280 (RS) constitute a propeptide, linker peptide. In terms of domain architecture, Ricin B-type lectin 1 spans 292 to 419 (YEPTVRIGGR…YRMRQGWRTG (128 aa)). One copy of the 1-alpha repeat lies at 302-344 (DGLCVDVSDNAYNNGNPIILWKCKDQLEVNQLWTLKSDKTIRS). Residues 345–385 (KGKCLTTYGYAPGNYVMIYDCSSAVAEATYWDIWDNGTIIN) form a 1-beta repeat. Asn-380 and Asn-420 each carry an N-linked (GlcNAc...) asparagine glycan. A 1-gamma repeat occupies 388 to 420 (SGLVLSAESSSMGGTLTVQKNDYRMRQGWRTGN). The Ricin B-type lectin 2 domain maps to 422–546 (TSPFVTSIAG…GNANQMWATL (125 aa)). Residues 433-468 (FKLCMEAHGNSMWLDVCDITKEEQQWAVYPDGSIRP) form a 2-alpha repeat. 2 disulfides stabilise this stretch: Cys-436–Cys-449 and Cys-475–Cys-492. Residues 472 to 511 (TNNCLTCEEHKQGATIVMMGCSNAWASQRWVFKSDGTIYN) form a 2-beta repeat. The stretch at 514–547 (DDMVMDVKSSDPSLKQIILWPYTGNANQMWATLF) is one 2-gamma repeat.

It in the N-terminal section; belongs to the ribosome-inactivating protein family. Type 2 RIP subfamily. As to quaternary structure, heterotetramer of two A and two B chains.

It carries out the reaction Endohydrolysis of the N-glycosidic bond at one specific adenosine on the 28S rRNA.. Its function is as follows. The A chain is responsible for inhibiting protein synthesis through the catalytic inactivation of 60S ribosomal subunits by removing adenine from position 4,324 of 28S rRNA. Less toxic than abrin-a. The B chain is a galactose-specific lectin that facilitates the binding to the cell membrane that precedes endocytosis. The polypeptide is Agglutinin-1 (Abrus precatorius (Indian licorice)).